Reading from the N-terminus, the 87-residue chain is Small ribosomal subunit protein eS21 (87 aa).

It belongs to the eukaryotic ribosomal protein eS21 family. As to quaternary structure, component of the small ribosomal subunit. Mature ribosomes consist of a small (40S) and a large (60S) subunit. The 40S subunit contains about 33 different proteins and 1 molecule of RNA (18S). The 60S subunit contains about 49 different proteins and 3 molecules of RNA (25S, 5.8S and 5S).

It is found in the cytoplasm. Functionally, required for the processing of the 20S rRNA-precursor to mature 18S rRNA in a late step of the maturation of 40S ribosomal subunits. Has a physiological role leading to 18S rRNA stability. This Eremothecium gossypii (strain ATCC 10895 / CBS 109.51 / FGSC 9923 / NRRL Y-1056) (Yeast) protein is Small ribosomal subunit protein eS21 (RPS21).